Reading from the N-terminus, the 371-residue chain is 4-hydroxy-3-methylbut-2-en-1-yl diphosphate synthase (flavodoxin) (371 aa).

The [4Fe-4S] cluster site is built by Cys-270, Cys-273, Cys-305, and Glu-312.

It belongs to the IspG family. It depends on [4Fe-4S] cluster as a cofactor.

It catalyses the reaction (2E)-4-hydroxy-3-methylbut-2-enyl diphosphate + oxidized [flavodoxin] + H2O + 2 H(+) = 2-C-methyl-D-erythritol 2,4-cyclic diphosphate + reduced [flavodoxin]. It participates in isoprenoid biosynthesis; isopentenyl diphosphate biosynthesis via DXP pathway; isopentenyl diphosphate from 1-deoxy-D-xylulose 5-phosphate: step 5/6. Its function is as follows. Converts 2C-methyl-D-erythritol 2,4-cyclodiphosphate (ME-2,4cPP) into 1-hydroxy-2-methyl-2-(E)-butenyl 4-diphosphate. The sequence is that of 4-hydroxy-3-methylbut-2-en-1-yl diphosphate synthase (flavodoxin) from Shewanella halifaxensis (strain HAW-EB4).